We begin with the raw amino-acid sequence, 103 residues long: Cell division protein FtsB (103 aa).

The Cytoplasmic portion of the chain corresponds to 1 to 3 (MGK). A helical transmembrane segment spans residues 4-21 (LTLLLLAILVWLQYSLWF). Residues 22-103 (GKNGIHDYSR…RAQTAGQNNR (82 aa)) are Periplasmic-facing. The stretch at 31–71 (RVNDDVAAQQATNAKLKARNDQLFAEIDDLNGGQEALEERA) forms a coiled coil.

The protein belongs to the FtsB family. As to quaternary structure, part of a complex composed of FtsB, FtsL and FtsQ.

It is found in the cell inner membrane. Functionally, essential cell division protein. May link together the upstream cell division proteins, which are predominantly cytoplasmic, with the downstream cell division proteins, which are predominantly periplasmic. This is Cell division protein FtsB from Escherichia fergusonii (strain ATCC 35469 / DSM 13698 / CCUG 18766 / IAM 14443 / JCM 21226 / LMG 7866 / NBRC 102419 / NCTC 12128 / CDC 0568-73).